The sequence spans 675 residues: NADH-ubiquinone oxidoreductase 75 kDa subunit (675 aa).

The region spanning K2–K80 is the 2Fe-2S ferredoxin-type domain. [2Fe-2S] cluster is bound by residues C36, C47, C50, and C64. The 40-residue stretch at K80–G119 folds into the 4Fe-4S His(Cys)3-ligated-type domain. Residues H96, C100, C103, C109, C148, C151, C154, and C198 each coordinate [4Fe-4S] cluster. The 4Fe-4S Mo/W bis-MGD-type domain occupies L217–R273.

The protein belongs to the complex I 75 kDa subunit family. Complex I is composed of about 30 different subunits. The cofactor is [2Fe-2S] cluster. [4Fe-4S] cluster serves as cofactor.

Its subcellular location is the mitochondrion inner membrane. The catalysed reaction is a ubiquinone + NADH + 5 H(+)(in) = a ubiquinol + NAD(+) + 4 H(+)(out). Its function is as follows. Core subunit of the mitochondrial membrane respiratory chain NADH dehydrogenase (Complex I) that is believed to belong to the minimal assembly required for catalysis. Complex I functions in the transfer of electrons from NADH to the respiratory chain. The immediate electron acceptor for the enzyme is believed to be ubiquinone. This is the largest subunit of complex I and it is a component of the iron-sulfur (IP) fragment of the enzyme. It may form part of the active site crevice where NADH is oxidized. This is NADH-ubiquinone oxidoreductase 75 kDa subunit (NAD11) from Acanthamoeba castellanii (Amoeba).